Reading from the N-terminus, the 475-residue chain is Bifunctional protein HldE (475 aa).

Residues 1 to 317 form a ribokinase region; sequence MQYSAQFNRA…ENAIHGRTTA (317 aa). 194–197 is a binding site for ATP; sequence NMSE. The active site involves D263. Residues 343-475 form a cytidylyltransferase region; that stretch reads MTNGCFDILH…VIKKIQQLKE (133 aa).

This sequence in the N-terminal section; belongs to the carbohydrate kinase PfkB family. It in the C-terminal section; belongs to the cytidylyltransferase family. Homodimer.

The catalysed reaction is D-glycero-beta-D-manno-heptose 7-phosphate + ATP = D-glycero-beta-D-manno-heptose 1,7-bisphosphate + ADP + H(+). It carries out the reaction D-glycero-beta-D-manno-heptose 1-phosphate + ATP + H(+) = ADP-D-glycero-beta-D-manno-heptose + diphosphate. The protein operates within nucleotide-sugar biosynthesis; ADP-L-glycero-beta-D-manno-heptose biosynthesis; ADP-L-glycero-beta-D-manno-heptose from D-glycero-beta-D-manno-heptose 7-phosphate: step 1/4. Its pathway is nucleotide-sugar biosynthesis; ADP-L-glycero-beta-D-manno-heptose biosynthesis; ADP-L-glycero-beta-D-manno-heptose from D-glycero-beta-D-manno-heptose 7-phosphate: step 3/4. Functionally, catalyzes the phosphorylation of D-glycero-D-manno-heptose 7-phosphate at the C-1 position to selectively form D-glycero-beta-D-manno-heptose-1,7-bisphosphate. Its function is as follows. Catalyzes the ADP transfer from ATP to D-glycero-beta-D-manno-heptose 1-phosphate, yielding ADP-D-glycero-beta-D-manno-heptose. The sequence is that of Bifunctional protein HldE from Histophilus somni (strain 129Pt) (Haemophilus somnus).